The sequence spans 449 residues: Glutamyl-tRNA reductase (449 aa).

Residues 58–61 (TCNR), Ser121, 126–128 (ETQ), and Gln132 contribute to the substrate site. The active-site Nucleophile is the Cys59. Residue 203–208 (GLGEMA) coordinates NADP(+).

It belongs to the glutamyl-tRNA reductase family. In terms of assembly, homodimer.

The catalysed reaction is (S)-4-amino-5-oxopentanoate + tRNA(Glu) + NADP(+) = L-glutamyl-tRNA(Glu) + NADPH + H(+). It participates in porphyrin-containing compound metabolism; protoporphyrin-IX biosynthesis; 5-aminolevulinate from L-glutamyl-tRNA(Glu): step 1/2. Catalyzes the NADPH-dependent reduction of glutamyl-tRNA(Glu) to glutamate 1-semialdehyde (GSA). In Helicobacter pylori (strain J99 / ATCC 700824) (Campylobacter pylori J99), this protein is Glutamyl-tRNA reductase.